We begin with the raw amino-acid sequence, 360 residues long: Phospho-N-acetylmuramoyl-pentapeptide-transferase (360 aa).

Helical transmembrane passes span 27–47 (IVGLLTALIIALWMGPHLIAW), 71–91 (TPTMGGIMILFSIAVSTLLWA), 97–117 (YVWCVLLVLIGYGIIGFIDDY), 132–152 (WKYFWQSVLALAVAFSMYAIG), 168–188 (VMPQLGMLYILLAYFVIVGTS), 199–219 (GLAIMPTVFVAAGFALVAWAT), 236–256 (AGELVIVCTAIVGAGLGFLWF), 263–283 (VFMGDVGSLALGGALGTIAVL), 288–308 (FLLVIMGGVFVVETLSVILQV), and 338–358 (VIVRFWIISLMLVLIGLATLK).

This sequence belongs to the glycosyltransferase 4 family. MraY subfamily. The cofactor is Mg(2+).

Its subcellular location is the cell inner membrane. It carries out the reaction UDP-N-acetyl-alpha-D-muramoyl-L-alanyl-gamma-D-glutamyl-meso-2,6-diaminopimeloyl-D-alanyl-D-alanine + di-trans,octa-cis-undecaprenyl phosphate = di-trans,octa-cis-undecaprenyl diphospho-N-acetyl-alpha-D-muramoyl-L-alanyl-D-glutamyl-meso-2,6-diaminopimeloyl-D-alanyl-D-alanine + UMP. It functions in the pathway cell wall biogenesis; peptidoglycan biosynthesis. In terms of biological role, catalyzes the initial step of the lipid cycle reactions in the biosynthesis of the cell wall peptidoglycan: transfers peptidoglycan precursor phospho-MurNAc-pentapeptide from UDP-MurNAc-pentapeptide onto the lipid carrier undecaprenyl phosphate, yielding undecaprenyl-pyrophosphoryl-MurNAc-pentapeptide, known as lipid I. This chain is Phospho-N-acetylmuramoyl-pentapeptide-transferase, found in Proteus mirabilis (strain HI4320).